Reading from the N-terminus, the 307-residue chain is Agmatinase (307 aa).

Positions 128, 151, 153, 155, 232, and 234 each coordinate Mn(2+).

Belongs to the arginase family. Agmatinase subfamily. Requires Mn(2+) as cofactor.

It catalyses the reaction agmatine + H2O = urea + putrescine. It functions in the pathway amine and polyamine biosynthesis; putrescine biosynthesis via agmatine pathway; putrescine from agmatine: step 1/1. Catalyzes the formation of putrescine from agmatine. The sequence is that of Agmatinase from Photorhabdus laumondii subsp. laumondii (strain DSM 15139 / CIP 105565 / TT01) (Photorhabdus luminescens subsp. laumondii).